A 90-amino-acid polypeptide reads, in one-letter code: U7-theraphotoxin-Hhn1c (90 aa).

Positions Met-1–Ser-19 are cleaved as a signal peptide. The propeptide occupies Phe-20 to Glu-50. Intrachain disulfides connect Cys-51/Cys-65, Cys-58/Cys-70, and Cys-64/Cys-81.

The protein belongs to the neurotoxin 10 (Hwtx-1) family. 13 (Hntx-13) subfamily. In terms of tissue distribution, expressed by the venom gland.

It localises to the secreted. Functionally, ion channel inhibitor. The sequence is that of U7-theraphotoxin-Hhn1c from Cyriopagopus hainanus (Chinese bird spider).